The sequence spans 100 residues: Urease subunit gamma (100 aa).

This sequence belongs to the urease gamma subunit family. Heterotrimer of UreA (gamma), UreB (beta) and UreC (alpha) subunits. Three heterotrimers associate to form the active enzyme.

The protein resides in the cytoplasm. It carries out the reaction urea + 2 H2O + H(+) = hydrogencarbonate + 2 NH4(+). It participates in nitrogen metabolism; urea degradation; CO(2) and NH(3) from urea (urease route): step 1/1. This is Urease subunit gamma from Laribacter hongkongensis (strain HLHK9).